Reading from the N-terminus, the 292-residue chain is Nucleotide-binding protein SACE_2139 (292 aa).

Residue 15 to 22 coordinates ATP; that stretch reads GLSGAGRS. Residue 66-69 participates in GTP binding; it reads DVRS.

This sequence belongs to the RapZ-like family.

In terms of biological role, displays ATPase and GTPase activities. The protein is Nucleotide-binding protein SACE_2139 of Saccharopolyspora erythraea (strain ATCC 11635 / DSM 40517 / JCM 4748 / NBRC 13426 / NCIMB 8594 / NRRL 2338).